We begin with the raw amino-acid sequence, 240 residues long: Late expression factor 5 homolog (240 aa).

The protein belongs to the baculoviridae LEF-5 family.

Its function is as follows. Required for late and very late gene expression. The chain is Late expression factor 5 homolog from Tortricidae (ClGV).